Here is a 501-residue protein sequence, read N- to C-terminus: ATP synthase subunit alpha (501 aa).

Residue 169–176 (GDRQTGKT) coordinates ATP.

The protein belongs to the ATPase alpha/beta chains family. As to quaternary structure, F-type ATPases have 2 components, CF(1) - the catalytic core - and CF(0) - the membrane proton channel. CF(1) has five subunits: alpha(3), beta(3), gamma(1), delta(1), epsilon(1). CF(0) has three main subunits: a(1), b(2) and c(9-12). The alpha and beta chains form an alternating ring which encloses part of the gamma chain. CF(1) is attached to CF(0) by a central stalk formed by the gamma and epsilon chains, while a peripheral stalk is formed by the delta and b chains.

It is found in the cell inner membrane. The catalysed reaction is ATP + H2O + 4 H(+)(in) = ADP + phosphate + 5 H(+)(out). Functionally, produces ATP from ADP in the presence of a proton gradient across the membrane. The alpha chain is a regulatory subunit. The polypeptide is ATP synthase subunit alpha (Campylobacter jejuni subsp. jejuni serotype O:23/36 (strain 81-176)).